The primary structure comprises 798 residues: Palmitoyl thioesterase CPT1C (798 aa).

Residues 1–52 are Cytoplasmic-facing; sequence MAEAHQASSLLSSLSSDGAEVELSSPVWQEIYLCALRSWKRHLWRVWNDFLA. Residues 53–75 form a helical membrane-spanning segment; it reads GVVPATPLSWLFLFSTIQLACLL. At 76 to 103 the chain is on the lumenal side; that stretch reads QLDPSLGLMEKIKELLPDWGGQHHQLQG. The helical transmembrane segment at 104-126 threads the bilayer; the sequence is FLSAAVFASCLWGALIFTLHVAL. At 127–798 the chain is on the cytoplasmic side; sequence RLLLSHHGWL…PNTPTSSTNL (672 aa). The active-site Proton acceptor is His469. CoA is bound at residue 551 to 563; the sequence is GKSFIKCCHVSSD. Residues Tyr585, Ser587, and Thr598 each contribute to the (R)-carnitine site. The required for interaction with GRIA1 stretch occupies residues 759-798; it reads LFRVGQHFKRQFRGENSDYRYNFLSCKTVDPNTPTSSTNL.

This sequence belongs to the carnitine/choline acetyltransferase family. In terms of assembly, peripherally associated with AMPAR complex. AMPAR complex consists of an inner core made of 4 pore-forming GluA/GRIA proteins (GRIA1, GRIA2, GRIA3 and GRIA4) and 4 major auxiliary subunits arranged in a twofold symmetry. One of the two pairs of distinct binding sites is occupied either by CNIH2, CNIH3 or CACNG2, CACNG3. The other harbors CACNG2, CACNG3, CACNG4, CACNG8 or GSG1L. This inner core of AMPAR complex is complemented by outer core constituents binding directly to the GluA/GRIA proteins at sites distinct from the interaction sites of the inner core constituents. Outer core constituents include at least PRRT1, PRRT2, CKAMP44/SHISA9, FRRS1L and NRN1. The proteins of the inner and outer core serve as a platform for other, more peripherally associated AMPAR constituents, including CPT1C. Alone or in combination, these auxiliary subunits control the gating and pharmacology of the AMPAR complex and profoundly impact their biogenesis and protein processing. Interacts with SACM1L; the interaction regulates SACM1L phosphatidylinositol-3-phosphatase activity and translocation to endoplasmic reticulum/trans Golgi network in a malonyl-CoA dependent manner. Interacts with ATL1. In terms of tissue distribution, predominantly expressed in brain (at protein level) and testis, highly expressed in the hippocampus, amygdala and cerebellum. Expressed in neurons but not astrocytes. Expressed in the ventral horn from spinal cords.

It is found in the synapse. It localises to the cell projection. Its subcellular location is the axon. The protein resides in the dendrite. The protein localises to the dendritic spine. It is found in the endoplasmic reticulum membrane. The enzyme catalyses S-hexadecanoyl-L-cysteinyl-[protein] + H2O = L-cysteinyl-[protein] + hexadecanoate + H(+). In terms of biological role, palmitoyl thioesterase specifically expressed in the endoplasmic reticulum of neurons. Modulates the trafficking of the glutamate receptor, AMPAR, to plasma membrane through depalmitoylation of GRIA1. Also regulates AMPR trafficking through the regulation of SACM1L phosphatidylinositol-3-phosphatase activity by interaction in a malonyl-CoA dependent manner. Binds malonyl-CoA and couples malonyl-CoA to ceramide levels, necessary for proper spine maturation and contributing to systemic energy homeostasis and appetite control. Binds to palmitoyl-CoA, but does not have carnitine palmitoyltransferase 1 catalytic activity or at very low levels. The sequence is that of Palmitoyl thioesterase CPT1C (Cpt1c) from Mus musculus (Mouse).